A 1937-amino-acid chain; its full sequence is Myosin-8 (1937 aa).

A Myosin N-terminal SH3-like domain is found at 35 to 84 (DAKTSVFVAEPKESYVKSVIQSKDGGKVTVKTESGATLTVKEDQVFPMNP). Phosphothreonine is present on residues Thr66 and Thr71. A Myosin motor domain is found at 88–781 (DKIEDMAMMT…LLGLLEEMRD (694 aa)). Lys132 carries the N6,N6,N6-trimethyllysine modification. ATP is bound at residue 181–188 (GESGAGKT). Tyr389 is subject to Phosphotyrosine. Thr419 carries the post-translational modification Phosphothreonine. Tyr424 is subject to Phosphotyrosine. Position 625 is a phosphoserine (Ser625). The segment at 658 to 680 (LNKLMTNLRSTHPHFVRCIIPNE) is actin-binding. His756 is modified (pros-methylhistidine). The interval 760-774 (KFGHTKVFFKAGLLG) is actin-binding. The IQ domain maps to 781–813 (DEKLAQIITRTQAVCRGYLMRVEYQKMLLRRES). A coiled-coil region spans residues 842–1937 (LLKSAETEKE…REVHTKISAE (1096 aa)). 2 positions are modified to phosphoserine: Ser1091 and Ser1095. The interval 1125–1171 (IEAERASRAKAEKQRSDLSRELEEISERLEEAGGATSAQVEMNKKRE) is disordered. Basic and acidic residues predominate over residues 1127-1155 (AERASRAKAEKQRSDLSRELEEISERLEE). Phosphoserine occurs at positions 1161 and 1236. Residue Thr1254 is modified to Phosphothreonine. At Ser1260 the chain carries Phosphoserine. The residue at position 1285 (Thr1285) is a Phosphothreonine. A phosphoserine mark is found at Ser1291, Ser1302, and Ser1305. Tyr1463 is modified (phosphotyrosine). At Thr1466 the chain carries Phosphothreonine. Phosphotyrosine is present on Tyr1491. Ser1494 carries the post-translational modification Phosphoserine. Residue Thr1500 is modified to Phosphothreonine. At Ser1513 the chain carries Phosphoserine. Thr1516 carries the post-translational modification Phosphothreonine. A phosphoserine mark is found at Ser1553, Ser1573, Ser1602, Ser1713, and Ser1725. A Phosphothreonine modification is found at Thr1729. Ser1738 is subject to Phosphoserine.

It belongs to the TRAFAC class myosin-kinesin ATPase superfamily. Myosin family. In terms of assembly, muscle myosin is a hexameric protein that consists of 2 heavy chain subunits (MHC), 2 alkali light chain subunits (MLC) and 2 regulatory light chain subunits (MLC-2).

It is found in the cytoplasm. The protein localises to the myofibril. In terms of biological role, muscle contraction. The protein is Myosin-8 (Myh8) of Mus musculus (Mouse).